Here is a 194-residue protein sequence, read N- to C-terminus: Peptidyl-tRNA hydrolase (194 aa).

Position 16 (Tyr-16) interacts with tRNA. The active-site Proton acceptor is the His-21. TRNA contacts are provided by Phe-67, Asn-69, and Asn-115.

Belongs to the PTH family. In terms of assembly, monomer.

The protein localises to the cytoplasm. The enzyme catalyses an N-acyl-L-alpha-aminoacyl-tRNA + H2O = an N-acyl-L-amino acid + a tRNA + H(+). Hydrolyzes ribosome-free peptidyl-tRNAs (with 1 or more amino acids incorporated), which drop off the ribosome during protein synthesis, or as a result of ribosome stalling. In terms of biological role, catalyzes the release of premature peptidyl moieties from peptidyl-tRNA molecules trapped in stalled 50S ribosomal subunits, and thus maintains levels of free tRNAs and 50S ribosomes. This Escherichia coli O81 (strain ED1a) protein is Peptidyl-tRNA hydrolase.